We begin with the raw amino-acid sequence, 106 residues long: Large ribosomal subunit protein uL24 (106 aa).

It belongs to the universal ribosomal protein uL24 family. Part of the 50S ribosomal subunit.

Functionally, one of two assembly initiator proteins, it binds directly to the 5'-end of the 23S rRNA, where it nucleates assembly of the 50S subunit. In terms of biological role, one of the proteins that surrounds the polypeptide exit tunnel on the outside of the subunit. This is Large ribosomal subunit protein uL24 from Thermosipho melanesiensis (strain DSM 12029 / CIP 104789 / BI429).